The chain runs to 490 residues: Kinetochore protein Nuf2 homolog (490 aa).

2 coiled-coil regions span residues 146 to 280 and 310 to 407; these read DRKF…KLEA and DLID…SETI. 2 disordered regions span residues 346-365 and 468-490; these read QSET…EERQ and IDAG…SVFK.

The protein belongs to the NUF2 family. In terms of assembly, component of the NDC80 complex, which is composed of at least ndc-80 and him-10. The NDC80 complex interacts with knl-1.

The protein localises to the nucleus. The protein resides in the chromosome. It localises to the centromere. It is found in the kinetochore. In terms of biological role, acts as a component of the essential kinetochore-associated NDC80 complex, which is required for chromosome segregation in mitosis and meiosis and spindle checkpoint activity. The ndc-80 complex synergistically enhances the affinity of the ska-1 complex for microtubules and may allow the ndc-80 complex to track depolymerizing microtubules. This chain is Kinetochore protein Nuf2 homolog (him-10), found in Caenorhabditis elegans.